We begin with the raw amino-acid sequence, 141 residues long: ATP synthase epsilon chain (141 aa).

This sequence belongs to the ATPase epsilon chain family. F-type ATPases have 2 components, CF(1) - the catalytic core - and CF(0) - the membrane proton channel. CF(1) has five subunits: alpha(3), beta(3), gamma(1), delta(1), epsilon(1). CF(0) has three main subunits: a, b and c.

It localises to the cell inner membrane. Functionally, produces ATP from ADP in the presence of a proton gradient across the membrane. The polypeptide is ATP synthase epsilon chain (Burkholderia cenocepacia (strain ATCC BAA-245 / DSM 16553 / LMG 16656 / NCTC 13227 / J2315 / CF5610) (Burkholderia cepacia (strain J2315))).